Here is a 161-residue protein sequence, read N- to C-terminus: Allophycocyanin beta chain (161 aa).

N71 bears the N4-methylasparagine mark. Position 81 (C81) interacts with (2R,3E)-phycocyanobilin.

The protein belongs to the phycobiliprotein family. In terms of assembly, heterodimer of an alpha and a beta chain. Post-translationally, contains one covalently linked phycocyanobilin chromophore.

It localises to the cellular thylakoid membrane. Light-harvesting photosynthetic bile pigment-protein from the phycobiliprotein complex. Allophycocyanin has a maximum absorption at approximately 650 nanometers. The sequence is that of Allophycocyanin beta chain (apcB) from Anabaena variabilis.